We begin with the raw amino-acid sequence, 314 residues long: Olfactory receptor 52K2 (314 aa).

The Extracellular segment spans residues methionine 1–isoleucine 27. A glycan (N-linked (GlcNAc...) asparagine) is linked at asparagine 5. A helical transmembrane segment spans residues tryptophan 28–leucine 48. The Cytoplasmic segment spans residues leucine 49–alanine 56. Residues leucine 57–serine 77 form a helical membrane-spanning segment. The Extracellular portion of the chain corresponds to serine 78–alanine 101. The cysteines at positions 99 and 191 are disulfide-linked. A helical transmembrane segment spans residues glutamine 102–phenylalanine 122. Over aspartate 123–serine 141 the chain is Cytoplasmic. The chain crosses the membrane as a helical span at residues leucine 142–proline 162. The Extracellular portion of the chain corresponds to phenylalanine 163–asparagine 198. A helical membrane pass occupies residues isoleucine 199–serine 219. Residues tyrosine 220–alanine 239 lie on the Cytoplasmic side of the membrane. The helical transmembrane segment at phenylalanine 240–serine 260 threads the bilayer. The Extracellular segment spans residues serine 261 to histidine 275. The helical transmembrane segment at isoleucine 276–valine 296 threads the bilayer. The Cytoplasmic segment spans residues lysine 297 to methionine 314.

The protein belongs to the G-protein coupled receptor 1 family.

It is found in the cell membrane. In terms of biological role, odorant receptor. The protein is Olfactory receptor 52K2 (OR52K2) of Homo sapiens (Human).